Here is a 122-residue protein sequence, read N- to C-terminus: Large ribosomal subunit protein uL14 (122 aa).

Belongs to the universal ribosomal protein uL14 family. Part of the 50S ribosomal subunit. Forms a cluster with proteins L3 and L19. In the 70S ribosome, L14 and L19 interact and together make contacts with the 16S rRNA in bridges B5 and B8.

Its function is as follows. Binds to 23S rRNA. Forms part of two intersubunit bridges in the 70S ribosome. This Streptomyces griseus subsp. griseus (strain JCM 4626 / CBS 651.72 / NBRC 13350 / KCC S-0626 / ISP 5235) protein is Large ribosomal subunit protein uL14.